We begin with the raw amino-acid sequence, 73 residues long: Translation initiation factor IF-1 (73 aa).

The 73-residue stretch at 1-73 (MAKKDGVIEI…TRGRIVYRYK (73 aa)) folds into the S1-like domain.

The protein belongs to the IF-1 family. Component of the 30S ribosomal translation pre-initiation complex which assembles on the 30S ribosome in the order IF-2 and IF-3, IF-1 and N-formylmethionyl-tRNA(fMet); mRNA recruitment can occur at any time during PIC assembly.

Its subcellular location is the cytoplasm. Its function is as follows. One of the essential components for the initiation of protein synthesis. Stabilizes the binding of IF-2 and IF-3 on the 30S subunit to which N-formylmethionyl-tRNA(fMet) subsequently binds. Helps modulate mRNA selection, yielding the 30S pre-initiation complex (PIC). Upon addition of the 50S ribosomal subunit IF-1, IF-2 and IF-3 are released leaving the mature 70S translation initiation complex. The chain is Translation initiation factor IF-1 from Leifsonia xyli subsp. xyli (strain CTCB07).